The sequence spans 290 residues: Enoyl-CoA hydratase, mitochondrial (290 aa).

The transit peptide at 1–27 (MAALRALLPRVRAPLRPWLFCPVQRSF) directs the protein to the mitochondrion. Substrate contacts are provided by residues 98-101 (ADIK) and glycine 141. Lysine 101 bears the N6-acetyllysine; alternate mark. Lysine 101 is subject to N6-succinyllysine; alternate. N6-succinyllysine is present on lysine 204. N6-acetyllysine is present on lysine 211.

This sequence belongs to the enoyl-CoA hydratase/isomerase family. Homohexamer; dimer of trimers.

It localises to the mitochondrion matrix. The enzyme catalyses a (3S)-3-hydroxyacyl-CoA = a (2E)-enoyl-CoA + H2O. It catalyses the reaction a (3E)-enoyl-CoA = a 4-saturated (2E)-enoyl-CoA. It carries out the reaction (3E)-hexenoyl-CoA = (2E)-hexenoyl-CoA. The catalysed reaction is (3S)-3-hydroxybutanoyl-CoA = (2E)-butenoyl-CoA + H2O. The enzyme catalyses 3-hydroxyisovaleryl-CoA = 3-methylbut-2-enoyl-CoA + H2O. It catalyses the reaction 3-hydroxypropanoyl-CoA = acryloyl-CoA + H2O. It carries out the reaction 3-hydroxybutanoyl-CoA = (2E)-butenoyl-CoA + H2O. The catalysed reaction is 2-methylpropenoyl-CoA + H2O = (S)-3-hydroxyisobutanoyl-CoA. The enzyme catalyses (3S)-hydroxyhexanoyl-CoA = (2E)-hexenoyl-CoA + H2O. It catalyses the reaction (3S)-hydroxydecanoyl-CoA = (2E)-decenoyl-CoA + H2O. Its pathway is lipid metabolism; fatty acid beta-oxidation. In terms of biological role, converts unsaturated trans-2-enoyl-CoA species ((2E)-enoyl-CoA) to the corresponding 3(S)-3-hydroxyacyl-CoA species through addition of a water molecule to the double bond. Catalyzes the hydration of medium- and short-chained fatty enoyl-CoA thioesters from 4 carbons long (C4) up to C16. Has high substrate specificity for crotonyl-CoA ((2E)-butenoyl-CoA) and moderate specificity for acryloyl-CoA, 3-methylcrotonyl-CoA (3-methyl-(2E)-butenoyl-CoA) and methacrylyl-CoA ((2E)-2-methylpropenoyl-CoA). Can bind tiglyl-CoA (2-methylcrotonoyl-CoA), but hydrates only a small amount of this substrate. Plays a key role in the beta-oxidation spiral of short- and medium-chain fatty acid oxidation. At a lower rate than the hydratase reaction, catalyzes the isomerase reaction of trans-3-enoyl-CoA species (such as (3E)-hexenoyl-CoA) to trans-2-enoyl-CoA species (such as (2E)-hexenoyl-CoA), which are subsequently hydrated to 3(S)-3-hydroxyacyl-CoA species (such as (3S)-hydroxyhexanoyl-CoA). The polypeptide is Enoyl-CoA hydratase, mitochondrial (ECHS1) (Bos taurus (Bovine)).